Here is a 475-residue protein sequence, read N- to C-terminus: Ankyrin repeat, SAM and basic leucine zipper domain-containing protein 1 (475 aa).

The interval 1-25 (MAASALRGLPVAGGGESSESEDDGW) is disordered. 3 positions are modified to phosphoserine: Ser-17, Ser-18, and Ser-20. ANK repeat units lie at residues 45–74 (EKKE…SVDS), 78–107 (YGWT…NASF), 110–144 (DKQS…DPNV), 148–177 (RLMT…EVNT), 181–210 (NGYT…NKML), and 214–243 (DGKM…PLEG). Positions 272-334 (SYTAFGDLEV…KILAALKELQ (63 aa)) constitute an SAM domain.

In terms of assembly, interacts with DDX4, PIWIL1, RANBP9 and TDRD1.

It localises to the cytoplasm. Plays a central role during spermatogenesis by repressing transposable elements and preventing their mobilization, which is essential for the germline integrity. Acts via the piRNA metabolic process, which mediates the repression of transposable elements during meiosis by forming complexes composed of piRNAs and Piwi proteins and governs the methylation and subsequent repression of transposons. Its association with pi-bodies suggests a participation in the primary piRNAs metabolic process. Required prior to the pachytene stage to facilitate the production of multiple types of piRNAs, including those associated with repeats involved in the regulation of retrotransposons. May act by mediating protein-protein interactions during germ cell maturation. This Pan troglodytes (Chimpanzee) protein is Ankyrin repeat, SAM and basic leucine zipper domain-containing protein 1 (ASZ1).